The primary structure comprises 1238 residues: Inner capsid protein VP2 (1238 aa).

The tract at residues 1 to 35 is disordered; the sequence is MSTSAKKTPESKTEDKIEPVIEQTSNDKPEPPPNK. Over residues 7-30 the composition is skewed to basic and acidic residues; it reads KTPESKTEDKIEPVIEQTSNDKPE.

Belongs to the turreted BTV-fold inner capsid family. In terms of assembly, homodecamer; each decamer is made up of two conformers of VP2, called VP2A and VP2B. 12 homodecamers assemble to form an icosahedral capsid.

Its subcellular location is the virion. Functionally, inner capsid protein that self-assembles to form an icosahedral capsid with a T=2 symmetry, which consists of 120 copies of VP2, with channels at each of its five-fold vertices. This capsid constitutes the innermost concentric layer of the viral mature particle. The sequence is that of Inner capsid protein VP2 (S2) from Cryphonectria parasitica (Chestnut blight fungus).